The following is a 143-amino-acid chain: S-adenosylmethionine decarboxylase proenzyme (143 aa).

The Schiff-base intermediate with substrate; via pyruvic acid role is filled by Ser-66. Residue Ser-66 is modified to Pyruvic acid (Ser); by autocatalysis. His-71 acts as the Proton acceptor; for processing activity in catalysis. The Proton donor; for catalytic activity role is filled by Cys-86.

This sequence belongs to the prokaryotic AdoMetDC family. Type 1 subfamily. Heterotetramer of two alpha and two beta chains arranged as a dimer of alpha/beta heterodimers. It depends on pyruvate as a cofactor. Post-translationally, is synthesized initially as an inactive proenzyme. Formation of the active enzyme involves a self-maturation process in which the active site pyruvoyl group is generated from an internal serine residue via an autocatalytic post-translational modification. Two non-identical subunits are generated from the proenzyme in this reaction, and the pyruvate is formed at the N-terminus of the alpha chain, which is derived from the carboxyl end of the proenzyme. The post-translation cleavage follows an unusual pathway, termed non-hydrolytic serinolysis, in which the side chain hydroxyl group of the serine supplies its oxygen atom to form the C-terminus of the beta chain, while the remainder of the serine residue undergoes an oxidative deamination to produce ammonia and the pyruvoyl group blocking the N-terminus of the alpha chain.

The catalysed reaction is S-adenosyl-L-methionine + H(+) = S-adenosyl 3-(methylsulfanyl)propylamine + CO2. The protein operates within amine and polyamine biosynthesis; S-adenosylmethioninamine biosynthesis; S-adenosylmethioninamine from S-adenosyl-L-methionine: step 1/1. Its function is as follows. Catalyzes the decarboxylation of S-adenosylmethionine to S-adenosylmethioninamine (dcAdoMet), the propylamine donor required for the synthesis of the polyamines spermine and spermidine from the diamine putrescine. This chain is S-adenosylmethionine decarboxylase proenzyme, found in Thermococcus gammatolerans (strain DSM 15229 / JCM 11827 / EJ3).